The primary structure comprises 108 residues: Iron-sulfur cluster assembly protein CyaY (108 aa).

This sequence belongs to the frataxin family.

Its function is as follows. Involved in iron-sulfur (Fe-S) cluster assembly. May act as a regulator of Fe-S biogenesis. This Burkholderia vietnamiensis (strain G4 / LMG 22486) (Burkholderia cepacia (strain R1808)) protein is Iron-sulfur cluster assembly protein CyaY.